Here is a 394-residue protein sequence, read N- to C-terminus: THAP domain-containing protein 5 (394 aa).

Residues 1 to 84 (MPRYCAAICC…LKQTAIPTIF (84 aa)) form a THAP-type zinc finger. The disordered stretch occupies residues 86-109 (LPEDNQEKDPSKKKSQKKKLKSEK). The HCFC1-binding motif (HBM) motif lies at 320-323 (EHSY). The stretch at 347–381 (LELQEQQTLGRLKSLEALIRQLKQENWLSEENVKI) forms a coiled coil.

As to quaternary structure, interacts with HTRA2; under apoptotic conditions. Interacts with ABRAXAS2. Cleaved by HTRA2 during apoptosis.

It is found in the nucleus. Functionally, has sequence-specific DNA-binding activity and can function as transcriptional repressor (in vitro). May be a regulator of cell cycle: THAP5 overexpression in human cell lines causes cell cycle arrest at G2/M phase. The chain is THAP domain-containing protein 5 (THAP5) from Bos taurus (Bovine).